Reading from the N-terminus, the 89-residue chain is Small ribosomal subunit protein bS18 (89 aa).

It belongs to the bacterial ribosomal protein bS18 family. Part of the 30S ribosomal subunit. Forms a tight heterodimer with protein bS6.

Binds as a heterodimer with protein bS6 to the central domain of the 16S rRNA, where it helps stabilize the platform of the 30S subunit. This Treponema denticola (strain ATCC 35405 / DSM 14222 / CIP 103919 / JCM 8153 / KCTC 15104) protein is Small ribosomal subunit protein bS18.